Reading from the N-terminus, the 445-residue chain is 3-phosphoshikimate 1-carboxyvinyltransferase (445 aa).

3 residues coordinate 3-phosphoshikimate: lysine 21, serine 22, and arginine 26. Lysine 21 contacts phosphoenolpyruvate. Phosphoenolpyruvate is bound by residues glycine 92 and arginine 120. The 3-phosphoshikimate site is built by serine 165, glutamine 166, aspartate 307, and lysine 334. Glutamine 166 is a phosphoenolpyruvate binding site. The Proton acceptor role is filled by aspartate 307. Positions 338, 379, and 405 each coordinate phosphoenolpyruvate.

The protein belongs to the EPSP synthase family. In terms of assembly, monomer.

The protein resides in the cytoplasm. It catalyses the reaction 3-phosphoshikimate + phosphoenolpyruvate = 5-O-(1-carboxyvinyl)-3-phosphoshikimate + phosphate. The protein operates within metabolic intermediate biosynthesis; chorismate biosynthesis; chorismate from D-erythrose 4-phosphate and phosphoenolpyruvate: step 6/7. Catalyzes the transfer of the enolpyruvyl moiety of phosphoenolpyruvate (PEP) to the 5-hydroxyl of shikimate-3-phosphate (S3P) to produce enolpyruvyl shikimate-3-phosphate and inorganic phosphate. The chain is 3-phosphoshikimate 1-carboxyvinyltransferase from Chlamydia abortus (strain DSM 27085 / S26/3) (Chlamydophila abortus).